Consider the following 336-residue polypeptide: CMP-sialic acid transporter (336 aa).

Residues 1 to 9 lie on the Cytoplasmic side of the membrane; that stretch reads MAQARENVS. Residues 10–30 form a helical membrane-spanning segment; it reads LFFKLYCLAVMTLVAAAYTVA. Over 31-45 the chain is Lumenal; that stretch reads LRYTRTTAKELYFST. A helical transmembrane segment spans residues 46 to 64; sequence TAVCVTEVIKLLISVGLLA. A CMP-N-acetyl-beta-neuraminate-binding site is contributed by Lys55. Over 65 to 87 the chain is Cytoplasmic; the sequence is KETGSLGRFKASLSENVLGSPKE. The chain crosses the membrane as a helical span at residues 88–108; that stretch reads LMKLSVPSLVYAVQNNMAFLA. 101-102 contributes to the CMP-N-acetyl-beta-neuraminate binding site; sequence QN. The Lumenal portion of the chain corresponds to 109-114; sequence LSNLDA. A helical membrane pass occupies residues 115 to 135; the sequence is AVYQVTYQLKIPCTALCTVLM. Residue 117–124 participates in CMP-N-acetyl-beta-neuraminate binding; it reads YQVTYQLK. Topologically, residues 136-141 are cytoplasmic; that stretch reads LNRTLS. Residues 142-160 traverse the membrane as a helical segment; the sequence is KLQWVSVFMLCGGVILVQW. Residues 161–175 lie on the Lumenal side of the membrane; sequence KPAQATKVVVEQSPL. The helical transmembrane segment at 176 to 196 threads the bilayer; it reads LGFGAIAIAVLCSGFAGVYFE. Residue Ser188 participates in CMP-N-acetyl-beta-neuraminate binding. Over 197–209 the chain is Cytoplasmic; that stretch reads KVLKSSDTSLWVR. Residue 210–214 participates in CMP-N-acetyl-beta-neuraminate binding; it reads NIQMY. The chain crosses the membrane as a helical span at residues 210–228; that stretch reads NIQMYLSGIVVTLVGTYLS. The Lumenal segment spans residues 229–243; sequence DGAEIKEKGFFYGYT. Residues 244–262 form a helical membrane-spanning segment; it reads YYVWFVIFLASVGGLYTSV. Over 263–269 the chain is Cytoplasmic; it reads VVKYTDN. A helical transmembrane segment spans residues 270–288; sequence IMKGFSAAAAIVLSTIASV. Lys272 is a binding site for CMP-N-acetyl-beta-neuraminate. Residues 289–296 are Lumenal-facing; that stretch reads MLFGLQIT. The helical transmembrane segment at 297 to 315 threads the bilayer; that stretch reads LSFAMGALLVCISIYLYGL. Residues 316 to 336 lie on the Cytoplasmic side of the membrane; the sequence is PRQDTTCIQQEATSKERVIGV. The segment at 316-336 is disordered; that stretch reads PRQDTTCIQQEATSKERVIGV.

Belongs to the nucleotide-sugar transporter family. SLC35A subfamily. Monomer.

The protein resides in the golgi apparatus membrane. The catalysed reaction is CMP-N-acetyl-beta-neuraminate(in) + CMP(out) = CMP-N-acetyl-beta-neuraminate(out) + CMP(in). It catalyses the reaction CMP-N-acetyl-beta-neuraminate(in) + AMP(out) = CMP-N-acetyl-beta-neuraminate(out) + AMP(in). It carries out the reaction CDP-L-ribitol(in) + CDP(out) = CDP-L-ribitol(out) + CDP(in). The enzyme catalyses UMP(out) + CMP-N-acetyl-beta-neuraminate(in) = UMP(in) + CMP-N-acetyl-beta-neuraminate(out). Its function is as follows. Transports CMP-sialic acid from the cytosol into the Golgi apparatus, functioning as an antiporter that exchanges CMP-sialic acid for CMP. Binds both CMP-sialic acid and free CMP, but has higher affinity for free CMP. Also able to exchange CMP-sialic acid for AMP and UMP. Also mediates the transport of CDP-ribitol. This Cricetulus griseus (Chinese hamster) protein is CMP-sialic acid transporter (SLC35A1).